We begin with the raw amino-acid sequence, 155 residues long: Endoribonuclease YbeY (155 aa).

Zn(2+) contacts are provided by His-120, His-124, and His-130.

The protein belongs to the endoribonuclease YbeY family. It depends on Zn(2+) as a cofactor.

It is found in the cytoplasm. Single strand-specific metallo-endoribonuclease involved in late-stage 70S ribosome quality control and in maturation of the 3' terminus of the 16S rRNA. The protein is Endoribonuclease YbeY of Staphylococcus aureus (strain bovine RF122 / ET3-1).